The primary structure comprises 227 residues: Mitochondrial cardiolipin hydrolase (227 aa).

Topologically, residues 1-14 (MDVFKQMSFKELMK) are mitochondrial intermembrane. The helical transmembrane segment at 15–33 (VLGLGTVAFVLGVEWLNWL) threads the bilayer. At 34 to 227 (TRRLRDSRGP…LQSKNGQIKK (194 aa)) the chain is on the cytoplasmic side. The PLD phosphodiesterase domain maps to 153–180 (SAVHMHHKFALVDGRKLISGSLNWTLTA). Residues His158, Lys160, and Asp165 contribute to the active site.

It belongs to the phospholipase D family. MitoPLD/Zucchini subfamily. As to quaternary structure, homodimer.

The protein localises to the mitochondrion outer membrane. The catalysed reaction is a cardiolipin + H2O = a 1,2-diacyl-sn-glycero-3-phospho-(1'-sn-glycerol) + a 1,2-diacyl-sn-glycero-3-phosphate + H(+). Its function is as follows. Presents phospholipase and nuclease activities, depending on the different physiological conditions. Plays a key role in mitochondrial fusion and fission via its phospholipase activity. In its phospholipase role, it uses the mitochondrial lipid cardiolipin as substrate to generate phosphatidate (PA or 1,2-diacyl-sn-glycero-3-phosphate), a second messenger signaling lipid. Production of PA facilitates Mitofusin-mediated fusion, whereas the cleavage of PA by the Lipin family of phosphatases produces diacylgycerol (DAG) which promotes mitochondrial fission. Regulates mitochondrial shape through facilitating mitochondrial fusion. During spermatogenesis, plays a critical role in PIWI-interacting RNA (piRNA) biogenesis. piRNAs provide essential protection against the activity of mobile genetic elements. piRNA-mediated transposon silencing is thus critical for maintaining genome stability, in particular in germline cells when transposons are mobilized as a consequence of wide-spread genomic demethylation. Has been shown to be a backbone-non-specific, single strand-specific nuclease, cleaving either RNA or DNA substrates with similar affinity. Produces 5' phosphate and 3' hydroxyl termini, suggesting it could directly participate in the processing of primary piRNA transcripts. Has been proposed to act as a cardiolipin hydrolase to generate phosphatidic acid at mitochondrial surface. Although it cannot be excluded that it can act as a phospholipase in some circumstances, this activity could not be confirmed. This Danio rerio (Zebrafish) protein is Mitochondrial cardiolipin hydrolase (pld6).